The sequence spans 1061 residues: TonB-dependent transporter Oar (1061 aa).

The N-terminal stretch at 1–26 (MHLNRVLRETGVVVAAGLLYGSAAFA) is a signal peptide. Residues 121-243 (EIVGAPPTID…TGGVINAVTR (123 aa)) form the TBDR plug domain. The region spanning 248-1061 (EFHGSVFANW…QVRFGIRYTF (814 aa)) is the TBDR beta-barrel domain. The tract at residues 701 to 722 (RSLAEPGQGTATSCDPSSFESQ) is disordered. Positions 709 to 722 (GTATSCDPSSFESQ) are enriched in polar residues.

The protein belongs to the TonB-dependent receptor family. As to quaternary structure, interacts with TonB. Part of a transport system composed of the outer membrane transporter Oar, the trans-periplasmic binding protein TonB and the inner membrane proteins ExbB and ExbD.

The protein localises to the cell outer membrane. Functionally, required for secretion of the protease PopC across the bacterial outer membrane. Binds and probably transports PopC from the periplasm to the extracellular milieu. It derives its energy for transport by interacting with the trans-periplasmic membrane protein TonB. Required for cellular adhesion during fruiting body formation, a multicellular developmental program that is induced in response to starvation. In Myxococcus xanthus, this protein is TonB-dependent transporter Oar.